The following is a 268-amino-acid chain: MDKLFKTSFRFIIRFLQILSLPVVFPYFLLSFLACLITSKNYESLPYNYPPEIRFKKVYRLVSMWLYIKGIKVVTVNDKIIPKKPVLVVANHKSNLDPLVLIKAFGRLKNSPPLTFVAKIELKDTVLFKLMKLIDCVFIDRKNIRQIANALETQQQLIRQGTAIAVFAEGTRILSNDIGEFKPGALKVAYNAFVPILPVSIVGSLGKMESNKRLKEHGVKKSSNYEVKVIFNKLINPISFNQIDSNNLANNIRSIISDAYTSEKPSND.

The HXXXXD motif signature appears at 92 to 97; that stretch reads HKSNLD.

This sequence belongs to the 1-acyl-sn-glycerol-3-phosphate acyltransferase family.

The catalysed reaction is a 1-acyl-sn-glycero-3-phosphate + an acyl-CoA = a 1,2-diacyl-sn-glycero-3-phosphate + CoA. It functions in the pathway phospholipid metabolism; CDP-diacylglycerol biosynthesis; CDP-diacylglycerol from sn-glycerol 3-phosphate: step 2/3. Functionally, converts lysophosphatidic acid (LPA) into phosphatidic acid by incorporating acyl moiety at the 2 position. This chain is Probable 1-acyl-sn-glycerol-3-phosphate acyltransferase (plsC), found in Mycoplasma genitalium (strain ATCC 33530 / DSM 19775 / NCTC 10195 / G37) (Mycoplasmoides genitalium).